Reading from the N-terminus, the 163-residue chain is Shikimate kinase (163 aa).

10–15 contacts ATP; the sequence is GVGKSS. Serine 14 lines the Mg(2+) pocket. The substrate site is built by aspartate 28, arginine 52, and glycine 75. An ATP-binding site is contributed by arginine 116. Arginine 134 is a binding site for substrate. Arginine 151 contributes to the ATP binding site.

It belongs to the shikimate kinase family. In terms of assembly, monomer. Mg(2+) is required as a cofactor.

It is found in the cytoplasm. The catalysed reaction is shikimate + ATP = 3-phosphoshikimate + ADP + H(+). It participates in metabolic intermediate biosynthesis; chorismate biosynthesis; chorismate from D-erythrose 4-phosphate and phosphoenolpyruvate: step 5/7. Its function is as follows. Catalyzes the specific phosphorylation of the 3-hydroxyl group of shikimic acid using ATP as a cosubstrate. The chain is Shikimate kinase from Streptococcus thermophilus (strain ATCC BAA-491 / LMD-9).